Here is a 296-residue protein sequence, read N- to C-terminus: Probable endonuclease 4 (296 aa).

Zn(2+)-binding residues include H68, H109, E144, D178, H181, H213, D226, H228, and E258.

Belongs to the AP endonuclease 2 family. The cofactor is Zn(2+).

The enzyme catalyses Endonucleolytic cleavage to 5'-phosphooligonucleotide end-products.. Functionally, endonuclease IV plays a role in DNA repair. It cleaves phosphodiester bonds at apurinic or apyrimidinic (AP) sites, generating a 3'-hydroxyl group and a 5'-terminal sugar phosphate. In Staphylococcus aureus (strain Mu3 / ATCC 700698), this protein is Probable endonuclease 4.